Reading from the N-terminus, the 1041-residue chain is Desmoglein-4 (1041 aa).

Residues 1-23 form the signal peptide; it reads MDWLLFRNICLLILFMVVLGVNS. Residues 24–49 constitute a propeptide that is removed on maturation; that stretch reads EFIVEVKELDIENGTTTWQTVRRQKR. 4 Cadherin domains span residues 50–157, 158–269, 270–385, and 389–497; these read EWIK…PPVF, TQNV…FPIL, EKTS…GPTF, and SMTF…CPVI. Topologically, residues 50-634 are extracellular; that stretch reads EWIKFAAACR…RQSNVGLGPA (585 aa). Asn110 is a glycosylation site (N-linked (GlcNAc...) asparagine). A glycan (N-linked (GlcNAc...) asparagine) is linked at Asn545. Residues 635 to 655 traverse the membrane as a helical segment; it reads GIGMIILGLLLLLLSPLLLLM. The Cytoplasmic segment spans residues 656–1041; the sequence is CCCKRRQPEG…RYSNMHYSRQ (386 aa). Desmoglein repeat repeat units lie at residues 884–910 and 911–941; these read TLSE…IVTE and TYTT…ETVM. Residues 1014–1041 form a disordered region; the sequence is ISQTTGSTSPMTSQHRVTRYSNMHYSRQ.

In terms of assembly, interacts with JUP. Strongly expressed in the skin; during the anagen stage of hair follicles in the matrix, precortex and inner rooth sheath.

It localises to the cell membrane. Its subcellular location is the cell junction. The protein resides in the desmosome. Functionally, a component of desmosome cell-cell junctions which are required for positive regulation of cellular adhesion. Coordinates the transition from proliferation to differentiation in hair follicle keratinocytes. Plays a role in moderating lymphocyte migration to inflamed skin and maintaining homeostasis of the epidermal inflammatory response. The sequence is that of Desmoglein-4 (Dsg4) from Mus musculus (Mouse).